We begin with the raw amino-acid sequence, 310 residues long: L-lactate dehydrogenase (310 aa).

NAD(+) contacts are provided by residues 10-11 (MV), aspartate 32, tyrosine 62, and 76-77 (GV). Residues glutamine 79, arginine 85, and 117 to 120 (NPVD) each bind substrate. NAD(+) is bound by residues 115 to 117 (ATN) and serine 140. 145–148 (DTAR) is a binding site for substrate. The beta-D-fructose 1,6-bisphosphate site is built by arginine 150 and histidine 165. The active-site Proton acceptor is histidine 172. Tyrosine 218 carries the phosphotyrosine modification. Substrate is bound at residue threonine 227.

The protein belongs to the LDH/MDH superfamily. LDH family. Homotetramer.

It localises to the cytoplasm. The enzyme catalyses (S)-lactate + NAD(+) = pyruvate + NADH + H(+). It participates in fermentation; pyruvate fermentation to lactate; (S)-lactate from pyruvate: step 1/1. With respect to regulation, allosterically activated by fructose 1,6-bisphosphate (FBP). Functionally, catalyzes the conversion of lactate to pyruvate. The chain is L-lactate dehydrogenase from Thermus thermophilus (strain ATCC 27634 / DSM 579 / HB8).